Here is a 149-residue protein sequence, read N- to C-terminus: Large ribosomal subunit protein bL9 (149 aa).

Belongs to the bacterial ribosomal protein bL9 family.

Its function is as follows. Binds to the 23S rRNA. This Thiobacillus denitrificans (strain ATCC 25259 / T1) protein is Large ribosomal subunit protein bL9.